The following is an 875-amino-acid chain: Serine/threonine-protein kinase D2 (875 aa).

The tract at residues 1-33 (MAAAPSHPAGLPCSPGPGSPPPPGGSDLQSLPP) is disordered. Residues 14–24 (SPGPGSPPPPG) show a composition bias toward pro residues. 2 positions are modified to phosphoserine: Ser-26 and Ser-30. Tyr-87 is subject to Phosphotyrosine. The segment at 138–188 (PHALTVHSYRAPAFCDHCGEMLFGLVRQGLKCDGCGLNYHKRCAFSIPNNC) adopts a Phorbol-ester/DAG-type 1 zinc-finger fold. Phosphoserine is present on residues Ser-197, Ser-198, Ser-200, Ser-203, Ser-206, Ser-211, Ser-212, and Ser-214. The tract at residues 224–247 (RSTTDLLPRRPPSSSSSSSSSSFY) is disordered. Residues 236-245 (SSSSSSSSSS) show a composition bias toward low complexity. Residue Ser-244 is modified to Phosphoserine; by CSNK1D and CSNK1E. Ser-245 bears the Phosphoserine mark. Residues 265-315 (PHTFLIHSYTRPTVCQACKKLLKGLFRQGLQCKDCKFNCHKRCATRVPNDC) form a Phorbol-ester/DAG-type 2 zinc finger. The region spanning 398 to 510 (TTLREGWVVH…WETAIRQALM (113 aa)) is the PH domain. Tyr-408 bears the Phosphotyrosine mark. Tyr-439 carries the post-translational modification Phosphotyrosine; by ABL1. Residue Ser-519 is modified to Phosphoserine. Residues 552 to 808 (IFPDEVLGSG…VDKSLSHPWL (257 aa)) enclose the Protein kinase domain. ATP contacts are provided by residues 558–566 (LGSGQFGVV) and Lys-581. Asp-675 functions as the Proton acceptor in the catalytic mechanism. A Phosphoserine; by PKC modification is found at Ser-707. A Phosphoserine modification is found at Ser-711. Residue Tyr-718 is modified to Phosphotyrosine; by ABL1. The Important for ABL1-mediated Tyr-718 phosphorylation motif lies at 725-727 (LNQ). Ser-873 carries the phosphoserine; by autocatalysis modification.

The protein belongs to the protein kinase superfamily. CAMK Ser/Thr protein kinase family. PKD subfamily. In terms of assembly, interacts (via C-terminus) with LCK. Interacts (via N-terminus and zing-finger domain 1 and 2) with PRKCD in response to oxidative stress; the interaction is independent of PRKD2 tyrosine phosphorylation. Mg(2+) is required as a cofactor. Phosphorylation of Ser-873 correlates with the activation status of the kinase. Ser-707 is probably phosphorylated by PKC. Phosphorylation at Ser-244 by CSNK1D and CSNK1E promotes nuclear localization and substrate targeting. Phosphorylation at Ser-244, Ser-707 and Ser-711 is required for nuclear localization. Phosphorylated at Tyr-438 by ABL1 in response to oxidative stress. Phosphorylated at Tyr-718 by ABL1 specifically in response to oxidative stress; requires prior phosphorylation at Ser-707 or/and Ser-711.

It localises to the cytoplasm. The protein localises to the cell membrane. Its subcellular location is the golgi apparatus. The protein resides in the trans-Golgi network. The catalysed reaction is L-seryl-[protein] + ATP = O-phospho-L-seryl-[protein] + ADP + H(+). It carries out the reaction L-threonyl-[protein] + ATP = O-phospho-L-threonyl-[protein] + ADP + H(+). With respect to regulation, activated by DAG and phorbol esters. Phorbol-ester/DAG-type domains bind DAG, mediating translocation to membranes. Autophosphorylation of Ser-711 and phosphorylation of Ser-707 by PKC relieves auto-inhibition by the PH domain. Catalytic activity is further increased by phosphorylation at Tyr-718 in response to oxidative stress. Its function is as follows. Serine/threonine-protein kinase that converts transient diacylglycerol (DAG) signals into prolonged physiological effects downstream of PKC, and is involved in the regulation of cell proliferation via MAPK1/3 (ERK1/2) signaling, oxidative stress-induced NF-kappa-B activation, inhibition of HDAC7 transcriptional repression, signaling downstream of T-cell antigen receptor (TCR) and cytokine production, and plays a role in Golgi membrane trafficking, angiogenesis, secretory granule release and cell adhesion. May potentiate mitogenesis induced by the neuropeptide bombesin by mediating an increase in the duration of MAPK1/3 (ERK1/2) signaling, which leads to accumulation of immediate-early gene products including FOS that stimulate cell cycle progression. In response to oxidative stress, is phosphorylated at Tyr-438 and Tyr-718 by ABL1, which leads to the activation of PRKD2 without increasing its catalytic activity, and mediates activation of NF-kappa-B. In response to the activation of the gastrin receptor CCKBR, is phosphorylated at Ser-244 by CSNK1D and CSNK1E, translocates to the nucleus, phosphorylates HDAC7, leading to nuclear export of HDAC7 and inhibition of HDAC7 transcriptional repression of NR4A1/NUR77. Upon TCR stimulation, is activated independently of ZAP70, translocates from the cytoplasm to the nucleus and is required for interleukin-2 (IL2) promoter up-regulation. During adaptive immune responses, is required in peripheral T-lymphocytes for the production of the effector cytokines IL2 and IFNG after TCR engagement and for optimal induction of antibody responses to antigens. In epithelial cells stimulated with lysophosphatidic acid (LPA), is activated through a PKC-dependent pathway and mediates LPA-stimulated interleukin-8 (IL8) secretion via a NF-kappa-B-dependent pathway. During TCR-induced T-cell activation, interacts with and is activated by the tyrosine kinase LCK, which results in the activation of the NFAT transcription factors. In the trans-Golgi network (TGN), regulates the fission of transport vesicles that are on their way to the plasma membrane and in polarized cells is involved in the transport of proteins from the TGN to the basolateral membrane. Plays an important role in endothelial cell proliferation and migration prior to angiogenesis, partly through modulation of the expression of KDR/VEGFR2 and FGFR1, two key growth factor receptors involved in angiogenesis. In secretory pathway, is required for the release of chromogranin-A (CHGA)-containing secretory granules from the TGN. Downstream of PRKCA, plays important roles in angiotensin-2-induced monocyte adhesion to endothelial cells. This is Serine/threonine-protein kinase D2 (Prkd2) from Rattus norvegicus (Rat).